The sequence spans 272 residues: Methylsterol monooxygenase 2-1 (272 aa).

3 helical membrane passes run 24–44 (IGSF…YIFL), 72–94 (LLLY…FRFM), and 107–127 (VVSA…YWGH). Positions 113–259 (LFYFIIEDFV…FVYMDWIFGT (147 aa)) constitute a Fatty acid hydroxylase domain. Residues 127 to 131 (HRILH) carry the Histidine box-1 motif. A Histidine box-2 motif is present at residues 140-144 (HSVHH). 2 helical membrane passes run 162-182 (ILFL…HLIT) and 209-229 (NFLP…AYSA). The Histidine box-3 signature appears at 231 to 237 (FHDYHHR).

It belongs to the sterol desaturase family. Fe cation is required as a cofactor. As to expression, strongly expressed in leaves, flowers, siliques and developing seeds.

The protein resides in the endoplasmic reticulum membrane. It carries out the reaction 4,4-dimethyl-5alpha-cholest-7-en-3beta-ol + 6 Fe(II)-[cytochrome b5] + 3 O2 + 5 H(+) = 4alpha-carboxy-4beta-methyl-5alpha-cholest-7-ene-3beta-ol + 6 Fe(III)-[cytochrome b5] + 4 H2O. It catalyses the reaction 24-methylidenelophenol + 6 Fe(II)-[cytochrome b5] + 3 O2 + 5 H(+) = 4alpha-carboxy-ergosta-7,24(24(1))-dien-3beta-ol + 6 Fe(III)-[cytochrome b5] + 4 H2O. In terms of biological role, non-heme iron oxygenase involved in sterols biosynthesis by catalyzing the removal of the second methyl group at the C-4 position. 24-ethylidenelophenol and 24-ethyllophenol are the preferred substrates. Together with SMO2-2, required during embryogenesis, probably by maintaining sterols and auxin homeostasis. This chain is Methylsterol monooxygenase 2-1, found in Arabidopsis thaliana (Mouse-ear cress).